A 198-amino-acid chain; its full sequence is Angiopoietin-like protein 8 (198 aa).

A signal peptide spans 1–15 (MAVLALCLLWTLASA).

Belongs to the ANGPTL8 family. In terms of assembly, interacts with ANGPTL3. In terms of processing, proteolytically cleaved at the N-terminus. In terms of tissue distribution, expressed in liver and fat. Enriched in white and brown adipose tissues.

Its subcellular location is the secreted. Its function is as follows. Hormone that acts as a blood lipid regulator by regulating serum triglyceride levels. May be involved in the metabolic transition between fasting and refeeding: required to direct fatty acids to adipose tissue for storage in the fed state. According to a report, may act by promoting ANGPTL3 cleavage. According to another study, not required for cleavage of ANGPTL3. This Mus musculus (Mouse) protein is Angiopoietin-like protein 8.